The primary structure comprises 202 residues: Na(+)-translocating NADH-quinone reductase subunit E (202 aa).

Transmembrane regions (helical) follow at residues 11 to 31 (SVFV…FLAI), 35 to 55 (IDAA…TVPV), 81 to 101 (FLGL…MEMV), 114 to 134 (GVFL…LLMV), 144 to 164 (VVFG…LAGI), and 182 to 202 (ITFI…GIAL).

This sequence belongs to the NqrDE/RnfAE family. As to quaternary structure, composed of six subunits; NqrA, NqrB, NqrC, NqrD, NqrE and NqrF.

It is found in the cell inner membrane. The enzyme catalyses a ubiquinone + n Na(+)(in) + NADH + H(+) = a ubiquinol + n Na(+)(out) + NAD(+). Functionally, NQR complex catalyzes the reduction of ubiquinone-1 to ubiquinol by two successive reactions, coupled with the transport of Na(+) ions from the cytoplasm to the periplasm. NqrA to NqrE are probably involved in the second step, the conversion of ubisemiquinone to ubiquinol. The chain is Na(+)-translocating NADH-quinone reductase subunit E from Saccharophagus degradans (strain 2-40 / ATCC 43961 / DSM 17024).